Reading from the N-terminus, the 866-residue chain is MNGEQQLDADAGSGMEEVELSWEDYLEETGSTAVPYGSFKHVDTRLQNGFAPGMKLEVAVRTDPETYWVATVITTCEQLLLLRYDGYGEDRRADFWCDIRKADLYPIGWCEQNKKTLEAPEGIRDKVSDWDEFLRQTLIGACSPPVPLLEGLRNGRNPLDLIAPGSRLECQAFQDSLSTWIVTVVENIGGRLKLRYEGLESSDNYEHWLYYLDPFLHHVGWAAQQGYELQPPSAIRHLKNEAEWQEILAKVKEEEEEPLPSYLFKDKQVIGIHTFSVNMKLEAVDPWSPFGISPATVVKVFDEKYFLVEMDDLRPENHARRSFVCHADSPGIFPVQWSLKNGLHISPPPGYPSQDFDWADYLKQCGAEAAPQRCFPPLISEHEFKENMKLEAVNPILPEEVCVATITAVRGSYLWLQLEGSKKPIPECIVSVESMDIFPLGWCETNGHPLSTPRRARVYKQRKIAVVQPEKQVPSSRTVHEGLRNQELNSTESVMINGKYCCPKIYFNHRCFSGPYLNKGRIAELPQCVGPGNCVLVLREVLTLLINAAYKPSRVLRELQLDKDSVWHGCGEVLKAKYKGKSYRATVEIVKTADRVTEFCRQTCIKLECCPNLFGPRMVLDKCSENCSVLTKTKYTHYYGKKKNKRIGRPPGGHSNLACALKKASKRRKRRKNVFVHKKKRSSASVDNTPAGSPQGSGGEDEDDPDEGDDDSLSEGSTSEQQDELQEESEMSEKKSCSSSPTQSEISTSLPPDRQRRKRELRTFSFSDDENKPPSPKEIRIEVAERLHLDSNPLKWSVADVVRFIRSTDCAPLARIFLDQEIDGQALLLLTLPTVQECMDLKLGPAIKLCHHIERIKFAFYEQFAN.

MBT repeat units follow at residues 20 to 120 (LSWE…LEAP), 128 to 232 (SDWD…LQPP), 242 to 348 (AEWQ…ISPP), and 356 to 453 (FDWA…LSTP). The segment at 34 to 42 (VPYGSFKHV) is antigenic epitope. The disordered stretch occupies residues 641–777 (KKKNKRIGRP…DDENKPPSPK (137 aa)). Residues 663–682 (KASKRRKRRKNVFVHKKKRS) are compositionally biased toward basic residues. A compositionally biased stretch (polar residues) spans 683 to 694 (SASVDNTPAGSP). Composition is skewed to acidic residues over residues 699–713 (GEDE…DDSL) and 721–730 (QQDELQEESE). A compositionally biased stretch (low complexity) spans 737–749 (CSSSPTQSEISTS). Ser767 and Ser775 each carry phosphoserine. In terms of domain architecture, SAM spans 796 to 864 (WSVADVVRFI…RIKFAFYEQF (69 aa)).

As to quaternary structure, interacts with MYOD1. Component of the SLC (SFMBT1-LSD1-CoREST) corepressor complex, which also contains KDM1A/LSD1 and RCOR1/CoREST. Interacts with KDM1A/LSD1 and RCOR1/CoREST. Interacts with L3MBTL3. In terms of tissue distribution, expressed in all cell lines and normal tissues tested, including the thymus.

The protein resides in the nucleus. Functionally, histone-binding protein, which is part of various corepressor complexes. Mediates the recruitment of corepressor complexes to target genes, followed by chromatin compaction and repression of transcription. Plays a role during myogenesis: required for the maintenance of undifferentiated states of myogenic progenitor cells via interaction with MYOD1. Interaction with MYOD1 leads to the recruitment of associated corepressors and silencing of MYOD1 target genes. Part of the SLC complex in germ cells, where it may play a role during spermatogenesis. This is Scm-like with four MBT domains protein 1 (SFMBT1) from Homo sapiens (Human).